The following is a 231-amino-acid chain: MDARQMKIKAAEAALSHVQDGMRLGIGTGSTAEEFVRLLAEKVAAGLKVEGVPTSERTARLCVELGVPLKSLDELPELDLTIDGADEVDHVLRLVKGGGGALLREKIVAAASGRMIVIADQSKVVETLGAFPLPIEINPFGQVATRIAIEKLAARSGLSGELTMRSSGDGAFMTDGGHLILDASFGRIPDAEALARELNTIPGVVEHGLFINLASLAIIAGPEGARMMQAV.

Residues 28 to 31, 83 to 86, and 96 to 99 each bind substrate; these read TGST, DGAD, and KGGG. Glutamate 105 acts as the Proton acceptor in catalysis. Lysine 123 is a binding site for substrate.

It belongs to the ribose 5-phosphate isomerase family. Homodimer.

The enzyme catalyses aldehydo-D-ribose 5-phosphate = D-ribulose 5-phosphate. It participates in carbohydrate degradation; pentose phosphate pathway; D-ribose 5-phosphate from D-ribulose 5-phosphate (non-oxidative stage): step 1/1. In terms of biological role, catalyzes the reversible conversion of ribose-5-phosphate to ribulose 5-phosphate. The protein is Ribose-5-phosphate isomerase A of Agrobacterium fabrum (strain C58 / ATCC 33970) (Agrobacterium tumefaciens (strain C58)).